An 88-amino-acid chain; its full sequence is ATP synthase subunit c 1 (88 aa).

A run of 2 helical transmembrane segments spans residues 4-24 (FTWV…GTAI) and 53-73 (IGLA…MIIL).

The protein belongs to the ATPase C chain family. In terms of assembly, F-type ATPases have 2 components, F(1) - the catalytic core - and F(0) - the membrane proton channel. F(1) has five subunits: alpha(3), beta(3), gamma(1), delta(1), epsilon(1). F(0) has three main subunits: a(1), b(2) and c(10-14). The alpha and beta chains form an alternating ring which encloses part of the gamma chain. F(1) is attached to F(0) by a central stalk formed by the gamma and epsilon chains, while a peripheral stalk is formed by the delta and b chains.

It localises to the cell inner membrane. Its function is as follows. F(1)F(0) ATP synthase produces ATP from ADP in the presence of a proton or sodium gradient. F-type ATPases consist of two structural domains, F(1) containing the extramembraneous catalytic core and F(0) containing the membrane proton channel, linked together by a central stalk and a peripheral stalk. During catalysis, ATP synthesis in the catalytic domain of F(1) is coupled via a rotary mechanism of the central stalk subunits to proton translocation. Key component of the F(0) channel; it plays a direct role in translocation across the membrane. A homomeric c-ring of between 10-14 subunits forms the central stalk rotor element with the F(1) delta and epsilon subunits. This chain is ATP synthase subunit c 1, found in Syntrophotalea carbinolica (strain DSM 2380 / NBRC 103641 / GraBd1) (Pelobacter carbinolicus).